The sequence spans 215 residues: Orotate phosphoribosyltransferase (215 aa).

Lys-26 lines the 5-phospho-alpha-D-ribose 1-diphosphate pocket. 34–35 (FF) provides a ligand contact to orotate. Residues 72–73 (YK), Arg-99, Lys-100, Lys-103, His-105, and 125–133 (DDVISSGIS) contribute to the 5-phospho-alpha-D-ribose 1-diphosphate site. Residues Ser-129 and Arg-157 each coordinate orotate.

The protein belongs to the purine/pyrimidine phosphoribosyltransferase family. PyrE subfamily. As to quaternary structure, homodimer. Requires Mg(2+) as cofactor.

The catalysed reaction is orotidine 5'-phosphate + diphosphate = orotate + 5-phospho-alpha-D-ribose 1-diphosphate. Its pathway is pyrimidine metabolism; UMP biosynthesis via de novo pathway; UMP from orotate: step 1/2. Functionally, catalyzes the transfer of a ribosyl phosphate group from 5-phosphoribose 1-diphosphate to orotate, leading to the formation of orotidine monophosphate (OMP). The polypeptide is Orotate phosphoribosyltransferase (Halorhodospira halophila (strain DSM 244 / SL1) (Ectothiorhodospira halophila (strain DSM 244 / SL1))).